A 78-amino-acid chain; its full sequence is MKAKIVLGAVILASGLLAGCSSSNNAQLDQISSDVNRLNTQVQQLSSDVQSANAQAKAAYEAARANQRLDNQVTTYKK.

An N-terminal signal peptide occupies residues 1 to 19 (MKAKIVLGAVILASGLLAG). Residue C20 is the site of N-palmitoyl cysteine attachment. A lipid anchor (S-diacylglycerol cysteine) is attached at C20. Repeats lie at residues 25–35 (NAQLDQISSDV) and 39–49 (NTQVQQLSSDV). A coiled-coil region spans residues 28–62 (LDQISSDVNRLNTQVQQLSSDVQSANAQAKAAYEA). Residue K78 is modified to N6-murein peptidoglycan lysine.

The protein belongs to the Lpp family. In terms of assembly, homotrimer.

It localises to the cell outer membrane. It is found in the secreted. The protein resides in the cell wall. A highly abundant outer membrane lipoprotein that controls the distance between the inner and outer membranes. The only protein known to be covalently linked to the peptidoglycan network (PGN). Also non-covalently binds the PGN. The link between the cell outer membrane and PGN contributes to maintenance of the structural and functional integrity of the cell envelope, and maintains the correct distance between the PGN and the outer membrane. This is Major outer membrane lipoprotein Lpp from Proteus mirabilis.